A 545-amino-acid chain; its full sequence is 2-succinyl-5-enolpyruvyl-6-hydroxy-3-cyclohexene-1-carboxylate synthase (545 aa).

The protein belongs to the TPP enzyme family. MenD subfamily. In terms of assembly, homodimer. Mg(2+) is required as a cofactor. Mn(2+) serves as cofactor. Requires thiamine diphosphate as cofactor.

The enzyme catalyses isochorismate + 2-oxoglutarate + H(+) = 5-enolpyruvoyl-6-hydroxy-2-succinyl-cyclohex-3-ene-1-carboxylate + CO2. It functions in the pathway quinol/quinone metabolism; 1,4-dihydroxy-2-naphthoate biosynthesis; 1,4-dihydroxy-2-naphthoate from chorismate: step 2/7. It participates in quinol/quinone metabolism; menaquinone biosynthesis. In terms of biological role, catalyzes the thiamine diphosphate-dependent decarboxylation of 2-oxoglutarate and the subsequent addition of the resulting succinic semialdehyde-thiamine pyrophosphate anion to isochorismate to yield 2-succinyl-5-enolpyruvyl-6-hydroxy-3-cyclohexene-1-carboxylate (SEPHCHC). In Nocardia farcinica (strain IFM 10152), this protein is 2-succinyl-5-enolpyruvyl-6-hydroxy-3-cyclohexene-1-carboxylate synthase.